The primary structure comprises 599 residues: Elongation factor 4 (599 aa).

The 183-residue stretch at 4–186 folds into the tr-type G domain; it reads ENIRNFSIIA…EIVTKIPPPQ (183 aa). GTP is bound by residues 16–21 and 133–136; these read DHGKST and NKID.

This sequence belongs to the TRAFAC class translation factor GTPase superfamily. Classic translation factor GTPase family. LepA subfamily.

The protein resides in the cell inner membrane. The catalysed reaction is GTP + H2O = GDP + phosphate + H(+). Functionally, required for accurate and efficient protein synthesis under certain stress conditions. May act as a fidelity factor of the translation reaction, by catalyzing a one-codon backward translocation of tRNAs on improperly translocated ribosomes. Back-translocation proceeds from a post-translocation (POST) complex to a pre-translocation (PRE) complex, thus giving elongation factor G a second chance to translocate the tRNAs correctly. Binds to ribosomes in a GTP-dependent manner. In Geotalea uraniireducens (strain Rf4) (Geobacter uraniireducens), this protein is Elongation factor 4.